Reading from the N-terminus, the 382-residue chain is UDP-4-amino-4-deoxy-L-arabinose--oxoglutarate aminotransferase (382 aa).

An N6-(pyridoxal phosphate)lysine modification is found at Lys183.

It belongs to the DegT/DnrJ/EryC1 family. ArnB subfamily. As to quaternary structure, homodimer. Pyridoxal 5'-phosphate is required as a cofactor.

It catalyses the reaction UDP-4-amino-4-deoxy-beta-L-arabinose + 2-oxoglutarate = UDP-beta-L-threo-pentopyranos-4-ulose + L-glutamate. It functions in the pathway nucleotide-sugar biosynthesis; UDP-4-deoxy-4-formamido-beta-L-arabinose biosynthesis; UDP-4-deoxy-4-formamido-beta-L-arabinose from UDP-alpha-D-glucuronate: step 2/3. It participates in bacterial outer membrane biogenesis; lipopolysaccharide biosynthesis. Catalyzes the conversion of UDP-4-keto-arabinose (UDP-Ara4O) to UDP-4-amino-4-deoxy-L-arabinose (UDP-L-Ara4N). The modified arabinose is attached to lipid A and is required for resistance to polymyxin and cationic antimicrobial peptides. The sequence is that of UDP-4-amino-4-deoxy-L-arabinose--oxoglutarate aminotransferase from Pseudomonas aeruginosa (strain LESB58).